Consider the following 60-residue polypeptide: UPF0434 protein Spro_1718 (60 aa).

This sequence belongs to the UPF0434 family.

The protein is UPF0434 protein Spro_1718 of Serratia proteamaculans (strain 568).